Here is a 118-residue protein sequence, read N- to C-terminus: Aspartate 1-decarboxylase (118 aa).

Residue Ser25 is the Schiff-base intermediate with substrate; via pyruvic acid of the active site. Ser25 carries the post-translational modification Pyruvic acid (Ser). Position 57 (Thr57) interacts with substrate. Catalysis depends on Tyr58, which acts as the Proton donor. Substrate is bound at residue 73–75 (GAA).

This sequence belongs to the PanD family. As to quaternary structure, heterooctamer of four alpha and four beta subunits. The cofactor is pyruvate. Post-translationally, is synthesized initially as an inactive proenzyme, which is activated by self-cleavage at a specific serine bond to produce a beta-subunit with a hydroxyl group at its C-terminus and an alpha-subunit with a pyruvoyl group at its N-terminus.

Its subcellular location is the cytoplasm. The enzyme catalyses L-aspartate + H(+) = beta-alanine + CO2. It participates in cofactor biosynthesis; (R)-pantothenate biosynthesis; beta-alanine from L-aspartate: step 1/1. Its function is as follows. Catalyzes the pyruvoyl-dependent decarboxylation of aspartate to produce beta-alanine. This chain is Aspartate 1-decarboxylase, found in Porphyromonas gingivalis (strain ATCC 33277 / DSM 20709 / CIP 103683 / JCM 12257 / NCTC 11834 / 2561).